Consider the following 649-residue polypeptide: Endoglucanase D (649 aa).

Positions 1–41 are cleaved as a signal peptide; it reads MSRMTLKSSMKKRVLSLLIAVVFLSLTGVFPSGLIETKVSA. D201 functions as the Nucleophile in the catalytic mechanism. Active-site residues include H516 and D546. Residue E555 is the Proton donor of the active site. Positions 579 to 649 constitute a Dockerin domain; sequence NEVLYGDVND…LIRVIEKLPI (71 aa).

It belongs to the glycosyl hydrolase 9 (cellulase E) family. Requires Ca(2+) as cofactor.

The enzyme catalyses Endohydrolysis of (1-&gt;4)-beta-D-glucosidic linkages in cellulose, lichenin and cereal beta-D-glucans.. Its function is as follows. This enzyme catalyzes the endohydrolysis of 1,4-beta-glucosidic linkages in cellulose, lichenin and cereal beta-D-glucans. The protein is Endoglucanase D (celD) of Acetivibrio thermocellus (strain ATCC 27405 / DSM 1237 / JCM 9322 / NBRC 103400 / NCIMB 10682 / NRRL B-4536 / VPI 7372) (Clostridium thermocellum).